Here is a 193-residue protein sequence, read N- to C-terminus: Peptidyl-tRNA hydrolase (193 aa).

Position 17 (tyrosine 17) interacts with tRNA. The active-site Proton acceptor is histidine 22. Tyrosine 68, asparagine 70, and asparagine 116 together coordinate tRNA.

Belongs to the PTH family. In terms of assembly, monomer.

It is found in the cytoplasm. It carries out the reaction an N-acyl-L-alpha-aminoacyl-tRNA + H2O = an N-acyl-L-amino acid + a tRNA + H(+). In terms of biological role, hydrolyzes ribosome-free peptidyl-tRNAs (with 1 or more amino acids incorporated), which drop off the ribosome during protein synthesis, or as a result of ribosome stalling. Catalyzes the release of premature peptidyl moieties from peptidyl-tRNA molecules trapped in stalled 50S ribosomal subunits, and thus maintains levels of free tRNAs and 50S ribosomes. The polypeptide is Peptidyl-tRNA hydrolase (Chromobacterium violaceum (strain ATCC 12472 / DSM 30191 / JCM 1249 / CCUG 213 / NBRC 12614 / NCIMB 9131 / NCTC 9757 / MK)).